Here is a 166-residue protein sequence, read N- to C-terminus: Cofilin-1 (166 aa).

Ala2 is subject to N-acetylalanine. A phosphoserine mark is found at Ser3 and Ser8. In terms of domain architecture, ADF-H spans Gly4–Leu153. An N6-acetyllysine modification is found at Lys13. Thr25 carries the phosphothreonine modification. The Nuclear localization signal signature appears at Lys30 to Lys34. Position 41 is a phosphoserine (Ser41). Tyr68 carries the post-translational modification Phosphotyrosine. N6-acetyllysine is present on Lys73. Lys132 is covalently cross-linked (Glycyl lysine isopeptide (Lys-Gly) (interchain with G-Cter in SUMO2)). Tyr140 is modified (phosphotyrosine). Lys144 carries the N6-acetyllysine modification. Ser156 carries the phosphoserine modification.

The protein belongs to the actin-binding proteins ADF family. In terms of assembly, can bind G- and F-actin in a 1:1 ratio of cofilin to actin. It is a major component of intranuclear and cytoplasmic actin rods. Interacts with the subcortical maternal complex (SCMC) via interaction with TLE6 and NLRP5. Interacts with C9orf72. Inactivated by phosphorylation on Ser-3. Phosphorylated on Ser-3 in resting cells. Dephosphorylated by PDXP/chronophin; this restores its activity in promoting actin filament depolymerization. The phosphorylation of Ser-24 may prevent recognition of the nuclear localization signal. Phosphorylated via a ARRB1-RAC1-LIMK1-PAK1 cascade upon active ligand stimulation of atypical chemokine receptor ACKR2.

It is found in the nucleus matrix. The protein localises to the cytoplasm. The protein resides in the cytoskeleton. Its subcellular location is the cell projection. It localises to the ruffle membrane. It is found in the lamellipodium membrane. The protein localises to the lamellipodium. The protein resides in the growth cone. Its subcellular location is the axon. In terms of biological role, binds to F-actin and exhibits pH-sensitive F-actin depolymerizing activity. Important for normal progress through mitosis and normal cytokinesis. In conjunction with the subcortical maternal complex (SCMC), plays an essential role for zygotes to progress beyond the first embryonic cell divisions via regulation of actin dynamics. Required for the centralization of the mitotic spindle and symmetric division of zygotes. Plays a role in the regulation of cell morphology and cytoskeletal organization in epithelial cells. Required for the up-regulation of atypical chemokine receptor ACKR2 from endosomal compartment to cell membrane, increasing its efficiency in chemokine uptake and degradation. Required for neural tube morphogenesis and neural crest cell migration. This is Cofilin-1 (CFL1) from Bos taurus (Bovine).